Consider the following 127-residue polypeptide: Fluoride-specific ion channel FluC 2 (127 aa).

4 helical membrane passes run 4 to 24 (IIAI…LSLL), 31 to 51 (FWIT…ITNL), 62 to 82 (IVIG…TFTF), and 94 to 114 (VLAL…GLAG). Residues Gly72 and Thr75 each contribute to the Na(+) site.

The protein belongs to the fluoride channel Fluc/FEX (TC 1.A.43) family.

The protein resides in the cell membrane. The enzyme catalyses fluoride(in) = fluoride(out). Na(+) is not transported, but it plays an essential structural role and its presence is essential for fluoride channel function. Its function is as follows. Fluoride-specific ion channel. Important for reducing fluoride concentration in the cell, thus reducing its toxicity. This chain is Fluoride-specific ion channel FluC 2, found in Lactiplantibacillus plantarum (strain ATCC BAA-793 / NCIMB 8826 / WCFS1) (Lactobacillus plantarum).